The sequence spans 138 residues: Large ribosomal subunit protein eL32 (138 aa).

It belongs to the eukaryotic ribosomal protein eL32 family.

The protein is Large ribosomal subunit protein eL32 of Saccharolobus islandicus (strain Y.N.15.51 / Yellowstone #2) (Sulfolobus islandicus).